The chain runs to 164 residues: Biotin carboxyl carrier protein of acetyl-CoA carboxylase (164 aa).

Positions 86 to 162 (GDFIVSPLVG…QFGSKLFRIV (77 aa)) constitute a Biotinyl-binding domain. Residue Lys128 is modified to N6-biotinyllysine.

Homodimer.

The protein operates within lipid metabolism; fatty acid biosynthesis. In terms of biological role, this protein is a component of the acetyl coenzyme A carboxylase complex; first, biotin carboxylase catalyzes the carboxylation of the carrier protein and then the transcarboxylase transfers the carboxyl group to form malonyl-CoA. The protein is Biotin carboxyl carrier protein of acetyl-CoA carboxylase (accB) of Chlamydia trachomatis serovar D (strain ATCC VR-885 / DSM 19411 / UW-3/Cx).